Consider the following 147-residue polypeptide: Flagellar assembly factor FliW (147 aa).

It belongs to the FliW family. In terms of assembly, interacts with translational regulator CsrA and flagellin(s).

Its subcellular location is the cytoplasm. Its function is as follows. Acts as an anti-CsrA protein, binds CsrA and prevents it from repressing translation of its target genes, one of which is flagellin. Binds to flagellin and participates in the assembly of the flagellum. The chain is Flagellar assembly factor FliW from Oceanobacillus iheyensis (strain DSM 14371 / CIP 107618 / JCM 11309 / KCTC 3954 / HTE831).